The chain runs to 354 residues: Transcription activator of gluconeogenesis ERT1-1 (354 aa).

Residues 1 to 29 are disordered; sequence MSFYPILRGPAKQESPPPPPAPKKRRKTA. A DNA-binding region (zn(2)-C6 fungal-type) is located at residues 32 to 60; the sequence is CLHCQKAHLTCDEGRPCARCIKKNMGDQC. Disordered regions lie at residues 71-111 and 128-169; these read LVGL…FGSS and DTSS…QGSP. The segment covering 81–98 has biased composition (low complexity); sequence QATQQKQQQQQQQQQAVQ. Residues 159 to 169 are compositionally biased toward polar residues; the sequence is SQTAGTPQGSP.

The protein belongs to the ERT1/acuK family.

The protein localises to the nucleus. Transcription factor which regulates nonfermentable carbon utilization. Activator of gluconeogenetic genes. The chain is Transcription activator of gluconeogenesis ERT1-1 (ERT1-1) from Yarrowia lipolytica (strain CLIB 122 / E 150) (Yeast).